A 367-amino-acid polypeptide reads, in one-letter code: Secondary metabolism regulator laeA (367 aa).

Residues 1-82 (MFGQQQQQQP…PETYPGHEEN (82 aa)) form a disordered region. Residues 19–41 (LNHNSRWTPPNESAQPRRSSNAM) are compositionally biased toward polar residues. Composition is skewed to basic and acidic residues over residues 47-56 (TDRDPAEGHP) and 71-82 (KSPETYPGHEEN).

This sequence belongs to the methyltransferase superfamily. LaeA methyltransferase family. Component of the heterotrimeric velvet complex composed of laeA, veA and velB; VeA acting as a bridging protein between laeA and velB.

It is found in the nucleus. The enzyme catalyses L-methionyl-[protein] + S-adenosyl-L-methionine = S-methyl-L-methionyl-[protein] + S-adenosyl-L-homocysteine. Its function is as follows. Methyltransferase that performs automethylation. No other methyl-accepting substrate has been identified yet. Component of the velvet transcription factor complex that acts as a global regulator for secondary metabolite gene expression. Controls the expression of the monacolin K gene clusters. Also regulates pigmentation. The polypeptide is Secondary metabolism regulator laeA (Monascus pilosus (Red mold)).